Consider the following 248-residue polypeptide: 23S rRNA (guanosine(2553)-2'-O)-methyltransferase RlmP (248 aa).

Residues arginine 123, glycine 204, valine 224, and leucine 233 each coordinate S-adenosyl-L-methionine.

The protein belongs to the class IV-like SAM-binding methyltransferase superfamily. RNA methyltransferase TrmH family. As to quaternary structure, homodimer.

The protein localises to the cytoplasm. It catalyses the reaction guanosine(2553) in 23S rRNA + S-adenosyl-L-methionine = 2'-O-methylguanosine(2553) in 23S rRNA + S-adenosyl-L-homocysteine + H(+). Its function is as follows. Specifically methylates the ribose of guanosine 2553 (G2553) in 23S rRNA. When the target G2553 is mutated, is able to methylate the ribose of adenosine, but it cannot methylate cytidine nor uridine. Modifies free 23S rRNA but not the fully assembled ribosome nor the 50S subunit, suggesting that the modification occurs early during ribosome biogenesis. This chain is 23S rRNA (guanosine(2553)-2'-O)-methyltransferase RlmP, found in Bacillus subtilis (strain 168).